The primary structure comprises 88 residues: Small ribosomal subunit protein bS20 (88 aa).

The protein belongs to the bacterial ribosomal protein bS20 family.

Functionally, binds directly to 16S ribosomal RNA. This chain is Small ribosomal subunit protein bS20, found in Bartonella quintana (strain Toulouse) (Rochalimaea quintana).